Here is a 218-residue protein sequence, read N- to C-terminus: Cytidylate kinase (218 aa).

7 to 15 contacts ATP; the sequence is GPSASGKSS.

It belongs to the cytidylate kinase family. Type 1 subfamily.

Its subcellular location is the cytoplasm. The catalysed reaction is CMP + ATP = CDP + ADP. The enzyme catalyses dCMP + ATP = dCDP + ADP. The polypeptide is Cytidylate kinase (Borrelia hermsii (strain HS1 / DAH)).